The sequence spans 89 residues: Small ribosomal subunit protein uS15 (89 aa).

This sequence belongs to the universal ribosomal protein uS15 family. In terms of assembly, part of the 30S ribosomal subunit. Forms a bridge to the 50S subunit in the 70S ribosome, contacting the 23S rRNA.

Functionally, one of the primary rRNA binding proteins, it binds directly to 16S rRNA where it helps nucleate assembly of the platform of the 30S subunit by binding and bridging several RNA helices of the 16S rRNA. In terms of biological role, forms an intersubunit bridge (bridge B4) with the 23S rRNA of the 50S subunit in the ribosome. This Methylococcus capsulatus (strain ATCC 33009 / NCIMB 11132 / Bath) protein is Small ribosomal subunit protein uS15.